The sequence spans 180 residues: DNA-directed RNA polymerase subunit Rpo7 (180 aa).

One can recognise an S1 motif domain in the interval 82 to 165; that stretch reads QEVVEGEVLQ…RLPRIALTMR (84 aa).

This sequence belongs to the eukaryotic RPB7/RPC8 RNA polymerase subunit family. Part of the 13-subunit RNA polymerase complex. Forms a stalk with Rpo4 that extends from the main structure.

Its subcellular location is the cytoplasm. The enzyme catalyses RNA(n) + a ribonucleoside 5'-triphosphate = RNA(n+1) + diphosphate. Its function is as follows. DNA-dependent RNA polymerase (RNAP) catalyzes the transcription of DNA into RNA using the four ribonucleoside triphosphates as substrates. The highly mobile Rpo4/Rpo7 heterodimer is conditionally required for transcription initiation. In Saccharolobus shibatae (strain ATCC 51178 / DSM 5389 / JCM 8931 / NBRC 15437 / B12) (Sulfolobus shibatae), this protein is DNA-directed RNA polymerase subunit Rpo7.